Reading from the N-terminus, the 274-residue chain is 2,3,4,5-tetrahydropyridine-2,6-dicarboxylate N-succinyltransferase (274 aa).

2 residues coordinate substrate: R106 and D143.

The protein belongs to the transferase hexapeptide repeat family. As to quaternary structure, homotrimer.

It is found in the cytoplasm. It carries out the reaction (S)-2,3,4,5-tetrahydrodipicolinate + succinyl-CoA + H2O = (S)-2-succinylamino-6-oxoheptanedioate + CoA. It functions in the pathway amino-acid biosynthesis; L-lysine biosynthesis via DAP pathway; LL-2,6-diaminopimelate from (S)-tetrahydrodipicolinate (succinylase route): step 1/3. The protein is 2,3,4,5-tetrahydropyridine-2,6-dicarboxylate N-succinyltransferase of Acidovorax ebreus (strain TPSY) (Diaphorobacter sp. (strain TPSY)).